The following is a 127-amino-acid chain: Large ribosomal subunit protein bL19 (127 aa).

The protein belongs to the bacterial ribosomal protein bL19 family.

This protein is located at the 30S-50S ribosomal subunit interface and may play a role in the structure and function of the aminoacyl-tRNA binding site. This chain is Large ribosomal subunit protein bL19, found in Cupriavidus pinatubonensis (strain JMP 134 / LMG 1197) (Cupriavidus necator (strain JMP 134)).